Here is a 478-residue protein sequence, read N- to C-terminus: Phosphoglycerate kinase 2, chloroplastic (478 aa).

Residues 1-74 (MASTAATAAL…GKGARGVITM (74 aa)) constitute a chloroplast transit peptide. A Phosphoserine modification is found at Ser78. (2R)-3-phosphoglycerate-binding residues include Ala96, Asp97, Asn99, Arg113, Thr135, His136, Gly138, Arg139, Arg194, His226, and Arg227. Gly272 is a binding site for ADP. Gly272 is a CDP binding site. The AMP site is built by Lys274 and Lys278. Lys278 is a binding site for ATP. Gly296 lines the ADP pocket. Gly296 is a CDP binding site. The AMP site is built by Gly297 and Gly369. ATP contacts are provided by Gly297 and Gly369. The CDP site is built by Gly394 and Phe399. Position 399 (Phe399) interacts with ADP. Glu400 serves as a coordination point for AMP. Glu400, Asp431, and Ser432 together coordinate ATP. Asp431 is a Mg(2+) binding site.

It belongs to the phosphoglycerate kinase family. In terms of assembly, monomer. Mg(2+) is required as a cofactor.

It is found in the plastid. Its subcellular location is the chloroplast. The catalysed reaction is (2R)-3-phosphoglycerate + ATP = (2R)-3-phospho-glyceroyl phosphate + ADP. Its pathway is carbohydrate biosynthesis; Calvin cycle. This chain is Phosphoglycerate kinase 2, chloroplastic, found in Arabidopsis thaliana (Mouse-ear cress).